The sequence spans 350 residues: GTP 3',8-cyclase (350 aa).

Residues 27–245 (TFGRIATDLR…LRAHFTLVPD (219 aa)) enclose the Radical SAM core domain. Arg36 is a binding site for GTP. Residues Cys43 and Cys47 each contribute to the [4Fe-4S] cluster site. Tyr49 contacts S-adenosyl-L-methionine. Residue Cys50 participates in [4Fe-4S] cluster binding. A GTP-binding site is contributed by Arg87. Gly91 contributes to the S-adenosyl-L-methionine binding site. Thr118 is a binding site for GTP. Position 142 (Ser142) interacts with S-adenosyl-L-methionine. Lys179 contributes to the GTP binding site. Met213 provides a ligand contact to S-adenosyl-L-methionine. Cys277 and Cys280 together coordinate [4Fe-4S] cluster. 282–284 (RTR) is a GTP binding site. Cys294 serves as a coordination point for [4Fe-4S] cluster.

The protein belongs to the radical SAM superfamily. MoaA family. Monomer and homodimer. [4Fe-4S] cluster is required as a cofactor.

The enzyme catalyses GTP + AH2 + S-adenosyl-L-methionine = (8S)-3',8-cyclo-7,8-dihydroguanosine 5'-triphosphate + 5'-deoxyadenosine + L-methionine + A + H(+). The protein operates within cofactor biosynthesis; molybdopterin biosynthesis. Catalyzes the cyclization of GTP to (8S)-3',8-cyclo-7,8-dihydroguanosine 5'-triphosphate. The polypeptide is GTP 3',8-cyclase (Mycobacterium sp. (strain JLS)).